The primary structure comprises 177 residues: Antigen TpF1 (177 aa).

Belongs to the Dps family. As to quaternary structure, homodecamer; either linked or stabilized by disulfide bonds.

In terms of biological role, may play an important structural role in the outer membrane. In Treponema pallidum (strain Nichols), this protein is Antigen TpF1 (tpf1).